Consider the following 573-residue polypeptide: Multidrug and toxin extrusion protein 2 (573 aa).

The Cytoplasmic portion of the chain corresponds to 1 to 46 (MEPAEDSLGATIQPPELVRVPRGRSLRILLGLRGALSPDVRREAAA). Residues 47–67 (LVALAGPVFLAQLMIFLISIV) form a helical membrane-spanning segment. Over 68 to 81 (SSIFCGHLGKVELD) the chain is Extracellular. Residues 82 to 102 (AVTLAVSVVNVTGISVGTGLA) traverse the membrane as a helical segment. Residues 103-122 (SACDTLMSQSFGGKNLKRVG) lie on the Cytoplasmic side of the membrane. The chain crosses the membrane as a helical span at residues 123 to 143 (VILQRGILILLLCCFPCWAIF). Over 144–161 (LNTERLLLLLRQDPDVAR) the chain is Extracellular. The helical transmembrane segment at 162–182 (LAQVYVMICIPALPAAFLFQL) threads the bilayer. Topologically, residues 183–196 (QTRYLQSQGIIMPQ) are cytoplasmic. The chain crosses the membrane as a helical span at residues 197 to 217 (VIVGIAANVVNVGMNAFLLYA). Residues 218–225 (LDLGVVGS) are Extracellular-facing. Residues 226-246 (AWANTTSQFFLSALLFLYVWW) traverse the membrane as a helical segment. The Cytoplasmic segment spans residues 247 to 266 (KRIHIHTWGGWTRECFQEWS). Residues 267-286 (SYTRLAIPSMFMVCIEWWTF) traverse the membrane as a helical segment. The Extracellular segment spans residues 287-304 (EIGTFLAGLVNVTELGAQ). The chain crosses the membrane as a helical span at residues 305 to 325 (AVIYELASVAYMVPFGFGVAA). Residues 326–345 (SVRVGNALGAGNADQARCSC) lie on the Cytoplasmic side of the membrane. A helical membrane pass occupies residues 346–366 (TTVLLCAGVCALLVGILLAAL). Over 367–379 (KDVVAYIFTNDKD) the chain is Extracellular. The chain crosses the membrane as a helical span at residues 380-400 (IISLVSQVMPIFAPFHLFDAL). The Cytoplasmic portion of the chain corresponds to 401-415 (AGTCGGVLRGTGKQK). Residues 416–436 (IGAVLNTIGYYGFGFPIGVSL) form a helical membrane-spanning segment. Over 437-443 (MFAAKLG) the chain is Extracellular. A helical membrane pass occupies residues 444 to 464 (IIGLWAGLIVCVSFQAFSYLI). The Cytoplasmic portion of the chain corresponds to 465–545 (YILRTNWSRV…VGEVLTGRQL (81 aa)). Residues 546–566 (VFYRGMALTVSVAVLIAGIVV) form a helical membrane-spanning segment. The Extracellular portion of the chain corresponds to 567-573 (RVFNDRG).

It belongs to the multi antimicrobial extrusion (MATE) (TC 2.A.66.1) family. As to expression, expressed in testis; especially in testicular Leydig cells.

Its subcellular location is the cell membrane. Its function is as follows. Multidrug efflux pump that functions as a H(+)/organic cation antiporter. May mediate testosterone efflux from the Leydig cells in the testes. This is Multidrug and toxin extrusion protein 2 (Slc47a2) from Mus musculus (Mouse).